A 288-amino-acid chain; its full sequence is Elongation factor Ts (288 aa).

Residues threonine 79–valine 82 form an involved in Mg(2+) ion dislocation from EF-Tu region.

The protein belongs to the EF-Ts family.

It localises to the cytoplasm. Its function is as follows. Associates with the EF-Tu.GDP complex and induces the exchange of GDP to GTP. It remains bound to the aminoacyl-tRNA.EF-Tu.GTP complex up to the GTP hydrolysis stage on the ribosome. This chain is Elongation factor Ts, found in Ehrlichia ruminantium (strain Gardel).